The chain runs to 639 residues: Mediator of RNA polymerase II transcription subunit 17 (639 aa).

Positions 160-187 (RLQNFNAAADKLLKSASRLENEVASETR) form a coiled coil.

The protein belongs to the Mediator complex subunit 17 family. Component of the Mediator complex.

The protein resides in the nucleus. Functionally, component of the Mediator complex, a coactivator involved in the regulated transcription of nearly all RNA polymerase II-dependent genes. Mediator functions as a bridge to convey information from gene-specific regulatory proteins to the basal RNA polymerase II transcription machinery. Mediator is recruited to promoters by direct interactions with regulatory proteins and serves as a scaffold for the assembly of a functional preinitiation complex with RNA polymerase II and the general transcription factors. The protein is Mediator of RNA polymerase II transcription subunit 17 (srb4) of Neosartorya fischeri (strain ATCC 1020 / DSM 3700 / CBS 544.65 / FGSC A1164 / JCM 1740 / NRRL 181 / WB 181) (Aspergillus fischerianus).